Consider the following 110-residue polypeptide: Large ribosomal subunit protein uL22 (110 aa).

The protein belongs to the universal ribosomal protein uL22 family. In terms of assembly, part of the 50S ribosomal subunit.

Functionally, this protein binds specifically to 23S rRNA; its binding is stimulated by other ribosomal proteins, e.g. L4, L17, and L20. It is important during the early stages of 50S assembly. It makes multiple contacts with different domains of the 23S rRNA in the assembled 50S subunit and ribosome. Its function is as follows. The globular domain of the protein is located near the polypeptide exit tunnel on the outside of the subunit, while an extended beta-hairpin is found that lines the wall of the exit tunnel in the center of the 70S ribosome. The chain is Large ribosomal subunit protein uL22 from Shewanella denitrificans (strain OS217 / ATCC BAA-1090 / DSM 15013).